Consider the following 291-residue polypeptide: Lipoyl synthase (291 aa).

Cys36, Cys41, Cys47, Cys62, Cys66, Cys69, and Ser275 together coordinate [4Fe-4S] cluster. Residues 48-264 (FSKKTATFLI…KEFAISIGFK (217 aa)) enclose the Radical SAM core domain.

This sequence belongs to the radical SAM superfamily. Lipoyl synthase family. [4Fe-4S] cluster is required as a cofactor.

Its subcellular location is the cytoplasm. It carries out the reaction [[Fe-S] cluster scaffold protein carrying a second [4Fe-4S](2+) cluster] + N(6)-octanoyl-L-lysyl-[protein] + 2 oxidized [2Fe-2S]-[ferredoxin] + 2 S-adenosyl-L-methionine + 4 H(+) = [[Fe-S] cluster scaffold protein] + N(6)-[(R)-dihydrolipoyl]-L-lysyl-[protein] + 4 Fe(3+) + 2 hydrogen sulfide + 2 5'-deoxyadenosine + 2 L-methionine + 2 reduced [2Fe-2S]-[ferredoxin]. It functions in the pathway protein modification; protein lipoylation via endogenous pathway; protein N(6)-(lipoyl)lysine from octanoyl-[acyl-carrier-protein]: step 2/2. Its function is as follows. Catalyzes the radical-mediated insertion of two sulfur atoms into the C-6 and C-8 positions of the octanoyl moiety bound to the lipoyl domains of lipoate-dependent enzymes, thereby converting the octanoylated domains into lipoylated derivatives. This is Lipoyl synthase from Caldicellulosiruptor bescii (strain ATCC BAA-1888 / DSM 6725 / KCTC 15123 / Z-1320) (Anaerocellum thermophilum).